We begin with the raw amino-acid sequence, 603 residues long: ATP-dependent zinc metalloprotease FtsH (603 aa).

The Stromal portion of the chain corresponds to 1-2; that stretch reads MK. The helical transmembrane segment at 3–23 threads the bilayer; sequence NLWIWSLPLIVLAFIGWQELA. The Lumenal portion of the chain corresponds to 24-101; it reads NQMPVATSRM…DVDVHAVSNW (78 aa). The helical transmembrane segment at 102 to 122 threads the bilayer; the sequence is INVASNWIIPLIIIGVVIWLL. At 123–603 the chain is on the stromal side; sequence SRSASSNTTG…SQAARLTAVN (481 aa). Position 194-201 (194-201) interacts with ATP; it reads GPPGTGKT. Position 415 (histidine 415) interacts with Zn(2+). Residue glutamate 416 is part of the active site. Histidine 419 and aspartate 493 together coordinate Zn(2+).

The protein in the central section; belongs to the AAA ATPase family. In the C-terminal section; belongs to the peptidase M41 family. As to quaternary structure, homohexamer. It depends on Zn(2+) as a cofactor.

The protein resides in the plastid. It is found in the chloroplast thylakoid membrane. In terms of biological role, acts as a processive, ATP-dependent zinc metallopeptidase. The protein is ATP-dependent zinc metalloprotease FtsH of Cyanidioschyzon merolae (strain NIES-3377 / 10D) (Unicellular red alga).